The primary structure comprises 180 residues: Large ribosomal subunit protein uL5 (180 aa).

It belongs to the universal ribosomal protein uL5 family. Part of the 50S ribosomal subunit; part of the 5S rRNA/L5/L18/L25 subcomplex. Contacts the 5S rRNA and the P site tRNA. Forms a bridge to the 30S subunit in the 70S ribosome.

Functionally, this is one of the proteins that bind and probably mediate the attachment of the 5S RNA into the large ribosomal subunit, where it forms part of the central protuberance. In the 70S ribosome it contacts protein S13 of the 30S subunit (bridge B1b), connecting the 2 subunits; this bridge is implicated in subunit movement. Contacts the P site tRNA; the 5S rRNA and some of its associated proteins might help stabilize positioning of ribosome-bound tRNAs. This Symbiobacterium thermophilum (strain DSM 24528 / JCM 14929 / IAM 14863 / T) protein is Large ribosomal subunit protein uL5.